The primary structure comprises 322 residues: Putative DNA-directed RNA polymerase subunit alpha-like 2 (322 aa).

The interval 1-232 is alpha N-terminal domain (alpha-NTD); the sequence is MSNPNNGAEW…GLLSLVFQAE (232 aa). An alpha C-terminal domain (alpha-CTD) region spans residues 280 to 322; that stretch reads EGPVTDEEGDSIDPTFTPVQKWDITMNSYQYSGETFQGLLSRF.

This sequence belongs to the RNA polymerase alpha chain family. In terms of assembly, in plastids the minimal PEP RNA polymerase catalytic core is composed of four subunits: alpha, beta, beta', and beta''. When a (nuclear-encoded) sigma factor is associated with the core the holoenzyme is formed, which can initiate transcription.

It is found in the plastid. The protein resides in the chloroplast. The enzyme catalyses RNA(n) + a ribonucleoside 5'-triphosphate = RNA(n+1) + diphosphate. In terms of biological role, DNA-dependent RNA polymerase catalyzes the transcription of DNA into RNA using the four ribonucleoside triphosphates as substrates. This chain is Putative DNA-directed RNA polymerase subunit alpha-like 2 (rpoAL2-A), found in Pelargonium hortorum (Common geranium).